Consider the following 473-residue polypeptide: Aspartyl/glutamyl-tRNA(Asn/Gln) amidotransferase subunit B (473 aa).

It belongs to the GatB/GatE family. GatB subfamily. Heterotrimer of A, B and C subunits.

It carries out the reaction L-glutamyl-tRNA(Gln) + L-glutamine + ATP + H2O = L-glutaminyl-tRNA(Gln) + L-glutamate + ADP + phosphate + H(+). The catalysed reaction is L-aspartyl-tRNA(Asn) + L-glutamine + ATP + H2O = L-asparaginyl-tRNA(Asn) + L-glutamate + ADP + phosphate + 2 H(+). Allows the formation of correctly charged Asn-tRNA(Asn) or Gln-tRNA(Gln) through the transamidation of misacylated Asp-tRNA(Asn) or Glu-tRNA(Gln) in organisms which lack either or both of asparaginyl-tRNA or glutaminyl-tRNA synthetases. The reaction takes place in the presence of glutamine and ATP through an activated phospho-Asp-tRNA(Asn) or phospho-Glu-tRNA(Gln). This chain is Aspartyl/glutamyl-tRNA(Asn/Gln) amidotransferase subunit B, found in Finegoldia magna (strain ATCC 29328 / DSM 20472 / WAL 2508) (Peptostreptococcus magnus).